We begin with the raw amino-acid sequence, 320 residues long: Ferrochelatase (320 aa).

His-194 and Glu-275 together coordinate Fe cation.

Belongs to the ferrochelatase family. In terms of assembly, monomer.

It localises to the cytoplasm. The catalysed reaction is heme b + 2 H(+) = protoporphyrin IX + Fe(2+). The protein operates within porphyrin-containing compound metabolism; protoheme biosynthesis; protoheme from protoporphyrin-IX: step 1/1. Functionally, catalyzes the ferrous insertion into protoporphyrin IX. The polypeptide is Ferrochelatase (Escherichia coli O139:H28 (strain E24377A / ETEC)).